Reading from the N-terminus, the 197-residue chain is Endoribonuclease YbeY (197 aa).

The Zn(2+) site is built by His-156, His-160, and His-166.

The protein belongs to the endoribonuclease YbeY family. Zn(2+) is required as a cofactor.

It is found in the cytoplasm. Single strand-specific metallo-endoribonuclease involved in late-stage 70S ribosome quality control and in maturation of the 3' terminus of the 16S rRNA. This Cupriavidus metallidurans (strain ATCC 43123 / DSM 2839 / NBRC 102507 / CH34) (Ralstonia metallidurans) protein is Endoribonuclease YbeY.